Reading from the N-terminus, the 295-residue chain is Diaminopimelate epimerase (295 aa).

The substrate site is built by asparagine 11 and asparagine 78. The active-site Proton donor is the cysteine 87. Substrate is bound by residues 88–89 (GN), asparagine 163, asparagine 199, and 220–221 (ER). Cysteine 229 serves as the catalytic Proton acceptor. 230-231 (GT) is a substrate binding site.

It belongs to the diaminopimelate epimerase family. Homodimer.

The protein resides in the cytoplasm. The enzyme catalyses (2S,6S)-2,6-diaminopimelate = meso-2,6-diaminopimelate. It functions in the pathway amino-acid biosynthesis; L-lysine biosynthesis via DAP pathway; DL-2,6-diaminopimelate from LL-2,6-diaminopimelate: step 1/1. Functionally, catalyzes the stereoinversion of LL-2,6-diaminopimelate (L,L-DAP) to meso-diaminopimelate (meso-DAP), a precursor of L-lysine and an essential component of the bacterial peptidoglycan. The polypeptide is Diaminopimelate epimerase (Mycobacteroides abscessus (strain ATCC 19977 / DSM 44196 / CCUG 20993 / CIP 104536 / JCM 13569 / NCTC 13031 / TMC 1543 / L948) (Mycobacterium abscessus)).